A 458-amino-acid polypeptide reads, in one-letter code: Exodeoxyribonuclease 7 large subunit (458 aa).

It belongs to the XseA family. Heterooligomer composed of large and small subunits.

The protein resides in the cytoplasm. It carries out the reaction Exonucleolytic cleavage in either 5'- to 3'- or 3'- to 5'-direction to yield nucleoside 5'-phosphates.. In terms of biological role, bidirectionally degrades single-stranded DNA into large acid-insoluble oligonucleotides, which are then degraded further into small acid-soluble oligonucleotides. This is Exodeoxyribonuclease 7 large subunit from Stutzerimonas stutzeri (strain A1501) (Pseudomonas stutzeri).